A 93-amino-acid polypeptide reads, in one-letter code: Putative pterin-4-alpha-carbinolamine dehydratase (93 aa).

The protein belongs to the pterin-4-alpha-carbinolamine dehydratase family.

It carries out the reaction (4aS,6R)-4a-hydroxy-L-erythro-5,6,7,8-tetrahydrobiopterin = (6R)-L-erythro-6,7-dihydrobiopterin + H2O. The protein is Putative pterin-4-alpha-carbinolamine dehydratase of Thermomicrobium roseum (strain ATCC 27502 / DSM 5159 / P-2).